Here is a 310-residue protein sequence, read N- to C-terminus: Protein BIG GRAIN 1 (310 aa).

The disordered stretch occupies residues Arg81–Ile141. Positions Ser90–Ala106 are enriched in low complexity.

Belongs to the BIG GRAIN 1 (BG1) plant protein family.

The protein resides in the cell membrane. Functionally, involved in auxin transport. Positive regulator of the auxin signaling pathway involved in gravitropism, plant growth and grain development. This Oryza sativa subsp. indica (Rice) protein is Protein BIG GRAIN 1.